The sequence spans 442 residues: MEPTFHAFMFPWFAFGHMIPFLHLANKLAEKGHQITFLLPKKAQKQLEHHNLFPDSIVFHPLTIPHVNGLPAGAETTSDISISMDNLLSEALDLTRDQVEAAVRALRPDLIFFDFAHWIPEIAKEHMIKSVSYMIVSATTIAYTFAPGGVLGVPPPGYPSSKVLYRENDAHALATLSIFYKRLYHQITTGFKSCDIIALRTCNEIEGKFCDYISSQYHKKVLLTGPMLPEQDTSKPLEEQLSHFLSRFPPRSVVFCALGSQIVLEKDQFQELCLGMELTGLPFLIAVKPPRGSSTVEEGLPEGFQERVKGRGVVWGGWVQQPLILDHPSIGCFVNHCGPGTIWECLMTDCQMVLLPFLGDQVLFTRLMTEEFKVSVEVSREKTGWFSKESLSDAIKSVMDKDSDLGKLVRSNHAKLKETLGSHGLLTGYVDKFVEELQEYLI.

UDP-alpha-D-glucose-binding positions include Ser-260, Val-319–Gln-321, His-336–Glu-344, and Leu-358–Gln-361.

Belongs to the UDP-glycosyltransferase family.

This is UDP-glycosyltransferase 79B8 (UGT79B8) from Arabidopsis thaliana (Mouse-ear cress).